The sequence spans 201 residues: 3-isopropylmalate dehydratase small subunit (201 aa).

It belongs to the LeuD family. LeuD type 1 subfamily. As to quaternary structure, heterodimer of LeuC and LeuD.

The enzyme catalyses (2R,3S)-3-isopropylmalate = (2S)-2-isopropylmalate. It functions in the pathway amino-acid biosynthesis; L-leucine biosynthesis; L-leucine from 3-methyl-2-oxobutanoate: step 2/4. Functionally, catalyzes the isomerization between 2-isopropylmalate and 3-isopropylmalate, via the formation of 2-isopropylmaleate. The polypeptide is 3-isopropylmalate dehydratase small subunit (Chloroflexus aurantiacus (strain ATCC 29366 / DSM 635 / J-10-fl)).